Here is a 347-residue protein sequence, read N- to C-terminus: Bifunctional dihydroflavonol 4-reductase/flavanone 4-reductase (347 aa).

K44 and Y163 together coordinate NADP(+).

The protein belongs to the NAD(P)-dependent epimerase/dehydratase family. Dihydroflavonol-4-reductase subfamily.

It carries out the reaction a (2R,3S,4S)-leucoanthocyanidin + NADP(+) = a (2R,3R)-dihydroflavonol + NADPH + H(+). The enzyme catalyses (2S)-flavan-4-ol + NADP(+) = (2S)-flavanone + NADPH + H(+). Functionally, bifunctional enzyme involved in the flavonoid metabolism. May use dihydroquercetin, eriodictyol, garbanzol (5-deoxydihydrokaempferol), dihydrofisetin (5-deoxydihydroquercetin), dihydrokaempferol to a low extent (5%), but not naringenin, 5-deoxynaringenin or butin (5-deoxyeriodictyol) as substrate. The protein is Bifunctional dihydroflavonol 4-reductase/flavanone 4-reductase (DFR) of Pyrus communis (Pear).